A 118-amino-acid polypeptide reads, in one-letter code: MKRIAFVFSTAPHGSASGREGLDALLATSALTEALGVFFISDGVFQLLPGQKPDAVLARDYIATFKLFDLYDIDQCWICAASLRERGLENINFVVDATPLEPVALRRELGNYDVILRF.

Belongs to the DsrF/TusC family. As to quaternary structure, heterohexamer, formed by a dimer of trimers. The hexameric TusBCD complex contains 2 copies each of TusB, TusC and TusD. The TusBCD complex interacts with TusE.

The protein resides in the cytoplasm. Functionally, part of a sulfur-relay system required for 2-thiolation of 5-methylaminomethyl-2-thiouridine (mnm(5)s(2)U) at tRNA wobble positions. This Salmonella typhimurium (strain LT2 / SGSC1412 / ATCC 700720) protein is Protein TusC.